Here is a 68-residue protein sequence, read N- to C-terminus: Guanine nucleotide-binding protein G(I)/G(S)/G(O) subunit gamma-10 (68 aa).

Ser-2 is modified (N-acetylserine). Cys-65 carries the cysteine methyl ester modification. The S-geranylgeranyl cysteine moiety is linked to residue Cys-65. Residues 66–68 (ALL) constitute a propeptide, removed in mature form.

It belongs to the G protein gamma family. As to quaternary structure, g proteins are composed of 3 units, alpha, beta and gamma. As to expression, abundantly and ubiquitously expressed.

It localises to the cell membrane. Functionally, guanine nucleotide-binding proteins (G proteins) are involved as a modulator or transducer in various transmembrane signaling systems. The beta and gamma chains are required for the GTPase activity, for replacement of GDP by GTP, and for G protein-effector interaction. Interacts with beta-1 and beta-2, but not with beta-3. The chain is Guanine nucleotide-binding protein G(I)/G(S)/G(O) subunit gamma-10 (GNG10) from Homo sapiens (Human).